Consider the following 198-residue polypeptide: MNRAADDLIASHLARSHAAMARAAQDTALLASAGRIAAKIVTALRSGRKLLIVGNGGSAADAQHIAAEIVGRYKQERPAFAAIALTTDTSALTAIGNDYGFDHVFARQVEGLGTSGDVLLAISTSGRSPSILNALRKARERGLTTIGFTGANGLAMGELCDELLVAPSDDTPLIQQIHLATAHGICETIEAALMQDLS.

The region spanning 40-198 (IVTALRSGRK…IEAALMQDLS (159 aa)) is the SIS domain. Substrate is bound at residue 55–57 (NGG). Residues H64 and E68 each contribute to the Zn(2+) site. Substrate is bound by residues E68, 97 to 98 (ND), 123 to 125 (STS), S128, and Q175. Residues Q175 and H183 each contribute to the Zn(2+) site.

It belongs to the SIS family. GmhA subfamily. Homotetramer. Zn(2+) is required as a cofactor.

The protein localises to the cytoplasm. The enzyme catalyses 2 D-sedoheptulose 7-phosphate = D-glycero-alpha-D-manno-heptose 7-phosphate + D-glycero-beta-D-manno-heptose 7-phosphate. The protein operates within carbohydrate biosynthesis; D-glycero-D-manno-heptose 7-phosphate biosynthesis; D-glycero-alpha-D-manno-heptose 7-phosphate and D-glycero-beta-D-manno-heptose 7-phosphate from sedoheptulose 7-phosphate: step 1/1. Functionally, catalyzes the isomerization of sedoheptulose 7-phosphate in D-glycero-D-manno-heptose 7-phosphate. The chain is Phosphoheptose isomerase from Bradyrhizobium sp. (strain BTAi1 / ATCC BAA-1182).